The following is a 321-amino-acid chain: RNA/RNP complex-1-interacting phosphatase (321 aa).

Positions 1–11 are enriched in basic residues; the sequence is MNQHYGRHGRG. The segment at 1–27 is disordered; that stretch reads MNQHYGRHGRGRGRDFAACAPPKKKGR. A Tyrosine-protein phosphatase domain is found at 60–207; sequence FEAKLMPEEC…LQKRHVRKNR (148 aa). Cys-151 serves as the catalytic Phosphocysteine intermediate. 152–157 is a substrate binding site; the sequence is THGLNR. Arg-157 acts as the Proton donor/acceptor in catalysis. The disordered stretch occupies residues 205 to 262; sequence KNRNVSAPRTDGLEDSADPTEQVYTNNKPVKKKPRKNRRGGHLAPSQHFQHQTQSSPY. Over residues 233–245 the composition is skewed to basic residues; that stretch reads PVKKKPRKNRRGG. Polar residues predominate over residues 251–262; that stretch reads QHFQHQTQSSPY.

It belongs to the protein-tyrosine phosphatase family. Non-receptor class dual specificity subfamily. As to quaternary structure, monomer. May interact with SFRS7 and SFRS9/SRP30C.

It is found in the nucleus. Its subcellular location is the nucleus speckle. Its function is as follows. Possesses RNA 5'-triphosphatase and diphosphatase activities, but displays a poor protein-tyrosine phosphatase activity. In addition, has phosphatase activity with ATP, ADP and O-methylfluorescein phosphate (in vitro). Binds to RNA. May participate in nuclear mRNA metabolism. The polypeptide is RNA/RNP complex-1-interacting phosphatase (Dusp11) (Mus musculus (Mouse)).